The primary structure comprises 196 residues: MPIGVPKVPFRSPGEEDASWVDIYNRLYRERLLFLGQEVDSEISNQLIGLMIYLSIEDDTQDLYLFINSPGGWVIPGVALYDTMQFVQPDVHTICMGSAASMGSFILVGGEITKRLAFPHARVMIHQPAGSFSEVATGEFILEVGELLKLRETLTRVYVQRTGKPVWVVSEDMERDVFMSATEAQAYGIVDLVAVE.

S101 serves as the catalytic Nucleophile. H126 is an active-site residue.

This sequence belongs to the peptidase S14 family. Component of the chloroplastic Clp protease core complex.

The protein resides in the plastid. It localises to the chloroplast stroma. The enzyme catalyses Hydrolysis of proteins to small peptides in the presence of ATP and magnesium. alpha-casein is the usual test substrate. In the absence of ATP, only oligopeptides shorter than five residues are hydrolyzed (such as succinyl-Leu-Tyr-|-NHMec, and Leu-Tyr-Leu-|-Tyr-Trp, in which cleavage of the -Tyr-|-Leu- and -Tyr-|-Trp bonds also occurs).. In terms of biological role, cleaves peptides in various proteins in a process that requires ATP hydrolysis. Has a chymotrypsin-like activity. Plays a major role in the degradation of misfolded proteins. This is ATP-dependent Clp protease proteolytic subunit from Helianthus annuus (Common sunflower).